Here is a 219-residue protein sequence, read N- to C-terminus: MAFLLHQARFYTTVNHLRDLPPTVQPEIAFAGRSNAGKSTAINVLCNQKRLAFASKTPGRTQHINYFSVGPAAEPVANLVDLPGYGYAEVPGAAKAHWEMLLSSYLATRSQLCGLILMMDSRRPLTDLDRRMIEWFVPTGKPIHTLLTKCDKLTRQESINALRNTQKGLDAYRDQGVKGKLTVQLFSALKRTGLDEAHELIESWLRPSVADEKSEPVAQ.

One can recognise an EngB-type G domain in the interval 24-207; the sequence is VQPEIAFAGR…HELIESWLRP (184 aa). GTP contacts are provided by residues 32-39, 59-63, 81-84, 148-151, and 186-188; these read GRSNAGKS, GRTQH, DLPG, TKCD, and FSA. Mg(2+)-binding residues include Ser-39 and Thr-61.

The protein belongs to the TRAFAC class TrmE-Era-EngA-EngB-Septin-like GTPase superfamily. EngB GTPase family. It depends on Mg(2+) as a cofactor.

Its function is as follows. Necessary for normal cell division and for the maintenance of normal septation. This is Probable GTP-binding protein EngB from Burkholderia ambifaria (strain ATCC BAA-244 / DSM 16087 / CCUG 44356 / LMG 19182 / AMMD) (Burkholderia cepacia (strain AMMD)).